The chain runs to 293 residues: Protease HtpX (293 aa).

The next 2 membrane-spanning stretches (helical) occupy residues 4–24 and 34–54; these read IALFLLTNLAVMLVFGLVLSL and GLMIMAGLFGFGGAFVSLLMS. Position 139 (His139) interacts with Zn(2+). Glu140 is a catalytic residue. His143 is a binding site for Zn(2+). 2 consecutive transmembrane segments (helical) span residues 158–178 and 193–213; these read IVNTFVIFISRLIAQVAAGFL and MVYFAVSMVLELVFGILASII. A Zn(2+)-binding site is contributed by Glu222.

Belongs to the peptidase M48B family. It depends on Zn(2+) as a cofactor.

The protein localises to the cell inner membrane. The sequence is that of Protease HtpX from Yersinia enterocolitica serotype O:8 / biotype 1B (strain NCTC 13174 / 8081).